We begin with the raw amino-acid sequence, 566 residues long: Proline--tRNA ligase (566 aa).

Belongs to the class-II aminoacyl-tRNA synthetase family. ProS type 1 subfamily. As to quaternary structure, homodimer.

The protein localises to the cytoplasm. It catalyses the reaction tRNA(Pro) + L-proline + ATP = L-prolyl-tRNA(Pro) + AMP + diphosphate. Catalyzes the attachment of proline to tRNA(Pro) in a two-step reaction: proline is first activated by ATP to form Pro-AMP and then transferred to the acceptor end of tRNA(Pro). As ProRS can inadvertently accommodate and process non-cognate amino acids such as alanine and cysteine, to avoid such errors it has two additional distinct editing activities against alanine. One activity is designated as 'pretransfer' editing and involves the tRNA(Pro)-independent hydrolysis of activated Ala-AMP. The other activity is designated 'posttransfer' editing and involves deacylation of mischarged Ala-tRNA(Pro). The misacylated Cys-tRNA(Pro) is not edited by ProRS. This is Proline--tRNA ligase from Bacillus anthracis (strain A0248).